Reading from the N-terminus, the 511-residue chain is ATP synthase subunit alpha, mitochondrial (511 aa).

171-178 (GDRQTGKT) is a binding site for ATP.

Belongs to the ATPase alpha/beta chains family. In terms of assembly, F-type ATPases have 2 components, CF(1) - the catalytic core - and CF(0) - the membrane proton channel. CF(1) has five subunits: alpha(3), beta(3), gamma(1), delta(1), epsilon(1). CF(0) has three main subunits: a, b and c.

The protein resides in the mitochondrion. It is found in the mitochondrion inner membrane. Its function is as follows. Mitochondrial membrane ATP synthase (F(1)F(0) ATP synthase or Complex V) produces ATP from ADP in the presence of a proton gradient across the membrane which is generated by electron transport complexes of the respiratory chain. F-type ATPases consist of two structural domains, F(1) - containing the extramembraneous catalytic core, and F(0) - containing the membrane proton channel, linked together by a central stalk and a peripheral stalk. During catalysis, ATP synthesis in the catalytic domain of F(1) is coupled via a rotary mechanism of the central stalk subunits to proton translocation. Subunits alpha and beta form the catalytic core in F(1). Rotation of the central stalk against the surrounding alpha(3)beta(3) subunits leads to hydrolysis of ATP in three separate catalytic sites on the beta subunits. Subunit alpha does not bear the catalytic high-affinity ATP-binding sites. This Oenothera biennis (German evening primrose) protein is ATP synthase subunit alpha, mitochondrial (ATPA).